The primary structure comprises 177 residues: Putative pre-16S rRNA nuclease (177 aa).

It belongs to the YqgF nuclease family.

It is found in the cytoplasm. In terms of biological role, could be a nuclease involved in processing of the 5'-end of pre-16S rRNA. This chain is Putative pre-16S rRNA nuclease, found in Psychrobacter arcticus (strain DSM 17307 / VKM B-2377 / 273-4).